The sequence spans 91 residues: MSVENSQIREPPPLPPVLLEVWPVIAVGALAWLVAAVAAFVVPGLASWRPVTVAGLATGLLGTTIFVWQLAAARRGARGAQAGLETYLDPK.

A run of 2 helical transmembrane segments spans residues 22–42 (WPVI…AFVV) and 53–73 (VAGL…LAAA).

It is found in the cell membrane. This is an uncharacterized protein from Mycobacterium bovis (strain ATCC BAA-935 / AF2122/97).